A 1266-amino-acid chain; its full sequence is SUMO-interacting motif-containing protein 1 (1266 aa).

A disordered region spans residues 1 to 35 (MEDFIVISDDSGSESSAGTRSGRARRLRRALSRTP). The span at 22–31 (GRARRLRRAL) shows a compositional bias: basic residues. The SUMO interaction motif 1 (SIM); mediates the binding to polysumoylated substrates motif lies at 45 to 49 (FIDLT). The SUMO interaction motif 2 (SIM); mediates the binding to polysumoylated substrates signature appears at 64–68 (VIDLT). Composition is skewed to low complexity over residues 183 to 197 (SPFS…SSSN) and 532 to 553 (SSGG…VPQS). Disordered stretches follow at residues 183 to 206 (SPFS…PCPQ), 532 to 732 (SSGG…SGDV), 756 to 812 (NRHS…PGSA), and 1024 to 1052 (LTPP…PQPN). A compositionally biased stretch (polar residues) spans 560 to 571 (SPGSVSQSSGDV). Positions 764–777 (SAPSSPSCSANPLS) are enriched in low complexity. The tract at residues 779–1266 (QSEFSSEKRP…NPDTEPASER (488 aa)) is interaction with SLF2. A required for inhibition of CAPN3 protease activity region spans residues 857 to 1266 (SKGQKLEPIP…NPDTEPASER (410 aa)). The NSE5-like domain stretch occupies residues 865–1200 (IPHRRLRMVT…IDRKDLIIKR (336 aa)).

Forms a heterodimer with SLF2. Interacts (via SIM domains) with SUMO1 and SUMO2. Interacts with CAPN3 and CTBP1. Interacts with SMC6 and ZNF451.

Its subcellular location is the nucleus. The protein localises to the PML body. In terms of biological role, inhibits the protease activity of CAPN3. May play a role in SMC5-SMC6 complex recruitment for viral restriction. Forms a complex with SLF2 and this complex is required to recruit SMC5-SMC6 complex to PML nuclear bodies and sites of viral replication. This Rattus norvegicus (Rat) protein is SUMO-interacting motif-containing protein 1 (Simc1).